Consider the following 119-residue polypeptide: uncharacterized protein (119 aa).

The interval 86 to 119 (KKQRMKMLTEQEEEEEEEEEEPPKPKKKVINRKK) is disordered. A compositionally biased stretch (acidic residues) spans 95 to 106 (EQEEEEEEEEEE). A compositionally biased stretch (basic residues) spans 110-119 (PKKKVINRKK).

This is an uncharacterized protein from Sputnik virophage.